The chain runs to 2338 residues: Proto-oncogene tyrosine-protein kinase ROS (2338 aa).

Residues 1–27 (MKRIRWLTPKPATFVVLGCVWISVAQG) form the signal peptide. Residues 28–1853 (TILSSCLTSC…EDGFWITETS (1826 aa)) lie on the Extracellular side of the membrane. N-linked (GlcNAc...) asparagine glycans are attached at residues Asn-52 and Asn-77. Fibronectin type-III domains lie at 110-205 (LPTA…VPET) and 206-294 (APFI…PSPA). Residues Asn-333, Asn-361, Asn-480, Asn-623, Asn-934, and Asn-1010 are each glycosylated (N-linked (GlcNAc...) asparagine). In terms of domain architecture, Fibronectin type-III 3 spans 566-666 (LPGHPQEVSV…EPSVGTTLVP (101 aa)). Fibronectin type-III domains lie at 942–1037 (IPDS…SVPS) and 1038–1145 (APEN…TSEI). The N-linked (GlcNAc...) asparagine glycan is linked to Asn-1298. 4 Fibronectin type-III domains span residues 1440–1548 (VASN…TKSG), 1549–1648 (VPGA…VNMF), 1650–1743 (TPEK…TKAG), and 1744–1845 (VPSK…LVED). An N-linked (GlcNAc...) asparagine glycan is attached at Asn-1675. A helical transmembrane segment spans residues 1854 to 1874 (FILTIIVGIFLVATVPLTFVW). The Cytoplasmic segment spans residues 1875-2338 (HRSLKNHKAT…AHSGHGDVSE (464 aa)). One can recognise a Protein kinase domain in the interval 1937 to 2210 (LSLRLLLGSG…YNIQDQLQLF (274 aa)). ATP contacts are provided by residues 1943-1951 (LGSGAFGEV) and Lys-1972. The active-site Proton acceptor is Asp-2071. Phosphotyrosine; by autocatalysis is present on Tyr-2266. Residues 2277 to 2314 (EDRYEGPLGSKESGLHDLKKDERQPADKDFCQQPQVAY) form a disordered region. Residues 2289–2306 (SGLHDLKKDERQPADKDF) are compositionally biased toward basic and acidic residues. The residue at position 2325 (Tyr-2325) is a Phosphotyrosine; by autocatalysis.

This sequence belongs to the protein kinase superfamily. Tyr protein kinase family. Insulin receptor subfamily. In terms of assembly, interacts with PTPN11; may activate the PI3 kinase-mTOR signaling pathway. Interacts with VAV3; constitutive interaction mediating VAV3 phosphorylation. Interacts with PTPN6 (via SH2 1 domain); the interaction is direct and promotes ROS1 dephosphorylation. Phosphorylated. Probably autophosphorylates. Phosphorylation at Tyr-2266 is required for the interaction with PTPN6 that mediates ROS1 dephosphorylation. Phosphorylation at Tyr-2266 stimulates the kinase activity and the activation of the ERK1 signaling cascade. Phosphorylation at Tyr-2266 and/or Tyr-2325 recruits PTPN11. As to expression, expressed in heart, lung, kidney and testis.

The protein resides in the cell membrane. The enzyme catalyses L-tyrosyl-[protein] + ATP = O-phospho-L-tyrosyl-[protein] + ADP + H(+). Its activity is regulated as follows. Inhibited by dephosphorylation by PTPN6. Orphan receptor tyrosine kinase (RTK) that plays a role in epithelial cell differentiation and regionalization of the proximal epididymal epithelium. NELL2 is an endogenous ligand for ROS1. Upon endogenous stimulation by NELL2, ROS1 activates the intracellular signaling pathway and triggers epididymal epithelial differentiation and subsequent sperm maturation. May activate several downstream signaling pathways related to cell differentiation, proliferation, growth and survival including the PI3 kinase-mTOR signaling pathway. Mediates the phosphorylation of PTPN11, an activator of this pathway. May also phosphorylate and activate the transcription factor STAT3 to control anchorage-independent cell growth. Mediates the phosphorylation and the activation of VAV3, a guanine nucleotide exchange factor regulating cell morphology. May activate other downstream signaling proteins including AKT1, MAPK1, MAPK3, IRS1 and PLCG2. In Rattus norvegicus (Rat), this protein is Proto-oncogene tyrosine-protein kinase ROS (Ros1).